A 304-amino-acid chain; its full sequence is Caspase-6 (304 aa).

Residues 1-29 form a disordered region; that stretch reads MSGAERRPAAGRVQLDSKPTPTTTADGNQ. Positions 1-35 are excised as a propeptide; that stretch reads MSGAERRPAAGRVQLDSKPTPTTTADGNQNITEVD. Polar residues predominate over residues 17 to 29; the sequence is SKPTPTTTADGNQ. Positions 54–56 are tri-arginine exosite; sequence QRR. His133 is an active-site residue. The 130's region stretch occupies residues 137-154; it reads DHVYAYDAQIKIETITNM. Cys175 is an active-site residue. The propeptide occupies 192 to 204; the sequence is SKDETTVNQTEVD.

Belongs to the peptidase C14A family. Heterotetramer that consists of two anti-parallel arranged heterodimers, each one formed by a 18 kDa (p18) and a 11 kDa (p11) subunit. As to quaternary structure, heterotetramer that consists of two anti-parallel arranged heterodimers, each one formed by a 18 kDa (Caspase-6 subunit p18) and a 11 kDa (Caspase-6 subunit p11) subunit. As to expression, widely expressed.

The protein resides in the cytoplasm. It localises to the nucleus. The enzyme catalyses Strict requirement for Asp at position P1 and has a preferred cleavage sequence of Val-Glu-His-Asp-|-.. Its activity is regulated as follows. During activation, the N-terminal prodomain is removed by cleavage. Concomitantly, double cleavage gives rise to a large 18-kDa and a small 11-kDa subunit. The two large and two small subunits then assemble to form the active CASP6 complex. Intramolecular cleavage at Asp-191 is a prerequisite for CASP6 self-activation. Cysteine protease that plays essential roles in programmed cell death, development and innate immunity. Acts as a non-canonical executioner caspase during apoptosis: localizes in the nucleus and cleaves the nuclear structural protein lamin-A/LMNA thereby inducing nuclear shrinkage and fragmentation. Lamin-A/LMNA cleavage is required for chromatin condensation and nuclear disassembly during apoptotic execution. Plays an essential role in defense against viruses by acting as a central mediator of the ZBP1-mediated pyroptosis, apoptosis, and necroptosis (PANoptosis), independently of its cysteine protease activity. PANoptosis is a unique inflammatory programmed cell death, which provides a molecular scaffold that allows the interactions and activation of machinery required for inflammasome/pyroptosis, apoptosis and necroptosis. The polypeptide is Caspase-6 (Gallus gallus (Chicken)).